The chain runs to 268 residues: tRNA pseudouridine synthase A (268 aa).

The active-site Nucleophile is Asp-63. Tyr-122 serves as a coordination point for substrate.

It belongs to the tRNA pseudouridine synthase TruA family. In terms of assembly, homodimer.

It catalyses the reaction uridine(38/39/40) in tRNA = pseudouridine(38/39/40) in tRNA. Functionally, formation of pseudouridine at positions 38, 39 and 40 in the anticodon stem and loop of transfer RNAs. The sequence is that of tRNA pseudouridine synthase A from Treponema denticola (strain ATCC 35405 / DSM 14222 / CIP 103919 / JCM 8153 / KCTC 15104).